The sequence spans 251 residues: Triosephosphate isomerase (251 aa).

Position 9–11 (N9–K11) interacts with substrate. H95 (electrophile) is an active-site residue. E167 serves as the catalytic Proton acceptor. Substrate is bound by residues G173, S213, and G234–G235.

This sequence belongs to the triosephosphate isomerase family. As to quaternary structure, homodimer.

The protein localises to the cytoplasm. The enzyme catalyses D-glyceraldehyde 3-phosphate = dihydroxyacetone phosphate. It functions in the pathway carbohydrate biosynthesis; gluconeogenesis. The protein operates within carbohydrate degradation; glycolysis; D-glyceraldehyde 3-phosphate from glycerone phosphate: step 1/1. Involved in the gluconeogenesis. Catalyzes stereospecifically the conversion of dihydroxyacetone phosphate (DHAP) to D-glyceraldehyde-3-phosphate (G3P). This is Triosephosphate isomerase from Citrifermentans bemidjiense (strain ATCC BAA-1014 / DSM 16622 / JCM 12645 / Bem) (Geobacter bemidjiensis).